Here is a 198-residue protein sequence, read N- to C-terminus: Superoxide dismutase [Fe] (198 aa).

Fe cation is bound by residues H27, H74, D157, and H161.

The protein belongs to the iron/manganese superoxide dismutase family. In terms of assembly, homodimer. It depends on Fe cation as a cofactor.

The enzyme catalyses 2 superoxide + 2 H(+) = H2O2 + O2. Functionally, destroys superoxide anion radicals which are normally produced within the cells and which are toxic to biological systems. The protein is Superoxide dismutase [Fe] (sodB) of Pseudomonas putida (strain ATCC 47054 / DSM 6125 / CFBP 8728 / NCIMB 11950 / KT2440).